We begin with the raw amino-acid sequence, 492 residues long: Probable cytosol aminopeptidase (492 aa).

Residues lysine 259 and aspartate 264 each contribute to the Mn(2+) site. Lysine 271 is an active-site residue. Residues aspartate 283, aspartate 342, and glutamate 344 each coordinate Mn(2+). Arginine 346 is an active-site residue.

It belongs to the peptidase M17 family. Mn(2+) serves as cofactor.

It localises to the cytoplasm. The catalysed reaction is Release of an N-terminal amino acid, Xaa-|-Yaa-, in which Xaa is preferably Leu, but may be other amino acids including Pro although not Arg or Lys, and Yaa may be Pro. Amino acid amides and methyl esters are also readily hydrolyzed, but rates on arylamides are exceedingly low.. It catalyses the reaction Release of an N-terminal amino acid, preferentially leucine, but not glutamic or aspartic acids.. Functionally, presumably involved in the processing and regular turnover of intracellular proteins. Catalyzes the removal of unsubstituted N-terminal amino acids from various peptides. The protein is Probable cytosol aminopeptidase (pepA) of Synechocystis sp. (strain ATCC 27184 / PCC 6803 / Kazusa).